We begin with the raw amino-acid sequence, 629 residues long: tRNA uridine 5-carboxymethylaminomethyl modification enzyme MnmG (629 aa).

Residue 13 to 18 coordinates FAD; that stretch reads GGGHAG. 273 to 287 is a binding site for NAD(+); sequence GPRYCPSIEDKIHRF.

The protein belongs to the MnmG family. As to quaternary structure, homodimer. Heterotetramer of two MnmE and two MnmG subunits. The cofactor is FAD.

The protein resides in the cytoplasm. NAD-binding protein involved in the addition of a carboxymethylaminomethyl (cmnm) group at the wobble position (U34) of certain tRNAs, forming tRNA-cmnm(5)s(2)U34. This chain is tRNA uridine 5-carboxymethylaminomethyl modification enzyme MnmG, found in Shewanella denitrificans (strain OS217 / ATCC BAA-1090 / DSM 15013).